The chain runs to 156 residues: Small ribosomal subunit protein uS7 (156 aa).

This sequence belongs to the universal ribosomal protein uS7 family. Part of the 30S ribosomal subunit. Contacts proteins S9 and S11.

One of the primary rRNA binding proteins, it binds directly to 16S rRNA where it nucleates assembly of the head domain of the 30S subunit. Is located at the subunit interface close to the decoding center, probably blocks exit of the E-site tRNA. In Teredinibacter turnerae (strain ATCC 39867 / T7901), this protein is Small ribosomal subunit protein uS7.